Reading from the N-terminus, the 334-residue chain is HTH-type transcriptional repressor PurR (334 aa).

An HTH lacI-type domain is found at 2–56 (ATIKDVARLAGVSTTTVSHVINKTRFVAEATQEKVNKAVDELNYAPSAVARSLKC). The H-T-H motif DNA-binding region spans 4–23 (IKDVARLAGVSTTTVSHVIN). A DNA-binding region spans residues 48 to 56 (SAVARSLKC). Hypoxanthine-binding residues include phenylalanine 73, lysine 189, phenylalanine 220, and aspartate 274.

In terms of assembly, homodimer.

Its pathway is purine metabolism; purine nucleotide biosynthesis [regulation]. Is the main repressor of the genes involved in the de novo synthesis of purine nucleotides, regulating purB, purC, purEK, purF, purHD, purL, purMN and guaBA expression. PurR is allosterically activated to bind its cognate DNA by binding the purine corepressors, hypoxanthine or guanine, thereby effecting transcription repression. This Vibrio atlanticus (strain LGP32) (Vibrio splendidus (strain Mel32)) protein is HTH-type transcriptional repressor PurR.